A 361-amino-acid polypeptide reads, in one-letter code: S-adenosylmethionine:tRNA ribosyltransferase-isomerase (361 aa).

It belongs to the QueA family. Monomer.

Its subcellular location is the cytoplasm. It catalyses the reaction 7-aminomethyl-7-carbaguanosine(34) in tRNA + S-adenosyl-L-methionine = epoxyqueuosine(34) in tRNA + adenine + L-methionine + 2 H(+). The protein operates within tRNA modification; tRNA-queuosine biosynthesis. In terms of biological role, transfers and isomerizes the ribose moiety from AdoMet to the 7-aminomethyl group of 7-deazaguanine (preQ1-tRNA) to give epoxyqueuosine (oQ-tRNA). The chain is S-adenosylmethionine:tRNA ribosyltransferase-isomerase from Haemophilus ducreyi (strain 35000HP / ATCC 700724).